We begin with the raw amino-acid sequence, 331 residues long: DNA-directed RNA polymerase subunit alpha (331 aa).

The interval methionine 1–asparagine 226 is alpha N-terminal domain (alpha-NTD). The interval threonine 243–glutamate 331 is alpha C-terminal domain (alpha-CTD).

The protein belongs to the RNA polymerase alpha chain family. Homodimer. The RNAP catalytic core consists of 2 alpha, 1 beta, 1 beta' and 1 omega subunit. When a sigma factor is associated with the core the holoenzyme is formed, which can initiate transcription.

The enzyme catalyses RNA(n) + a ribonucleoside 5'-triphosphate = RNA(n+1) + diphosphate. Its function is as follows. DNA-dependent RNA polymerase catalyzes the transcription of DNA into RNA using the four ribonucleoside triphosphates as substrates. The polypeptide is DNA-directed RNA polymerase subunit alpha (Bifidobacterium longum (strain NCC 2705)).